Reading from the N-terminus, the 87-residue chain is MKQGIHPDYREVVFQDMSNGFKFITRSTIQTRETIEFEGKTYPLAKIEVSSESHSFYTGQQKIMDTAGRVEKFKNKFGARASGKAAK.

Belongs to the bacterial ribosomal protein bL31 family. Type B subfamily. Part of the 50S ribosomal subunit.

In Burkholderia pseudomallei (strain 1106a), this protein is Large ribosomal subunit protein bL31B.